We begin with the raw amino-acid sequence, 491 residues long: Glutamyl-tRNA(Gln) amidotransferase subunit A (491 aa).

Active-site charge relay system residues include Lys-76 and Ser-154. The active-site Acyl-ester intermediate is Ser-178.

It belongs to the amidase family. GatA subfamily. Heterotrimer of A, B and C subunits.

The catalysed reaction is L-glutamyl-tRNA(Gln) + L-glutamine + ATP + H2O = L-glutaminyl-tRNA(Gln) + L-glutamate + ADP + phosphate + H(+). Its function is as follows. Allows the formation of correctly charged Gln-tRNA(Gln) through the transamidation of misacylated Glu-tRNA(Gln) in organisms which lack glutaminyl-tRNA synthetase. The reaction takes place in the presence of glutamine and ATP through an activated gamma-phospho-Glu-tRNA(Gln). This chain is Glutamyl-tRNA(Gln) amidotransferase subunit A, found in Cereibacter sphaeroides (strain ATCC 17023 / DSM 158 / JCM 6121 / CCUG 31486 / LMG 2827 / NBRC 12203 / NCIMB 8253 / ATH 2.4.1.) (Rhodobacter sphaeroides).